The chain runs to 200 residues: Imidazole glycerol phosphate synthase subunit HisH (200 aa).

A Glutamine amidotransferase type-1 domain is found at 3 to 200; it reads DVALIDAGGA…LRNFLEMSFP (198 aa). Residue Cys78 is the Nucleophile of the active site. Active-site residues include His179 and Glu181.

In terms of assembly, heterodimer of HisH and HisF.

The protein resides in the cytoplasm. It carries out the reaction 5-[(5-phospho-1-deoxy-D-ribulos-1-ylimino)methylamino]-1-(5-phospho-beta-D-ribosyl)imidazole-4-carboxamide + L-glutamine = D-erythro-1-(imidazol-4-yl)glycerol 3-phosphate + 5-amino-1-(5-phospho-beta-D-ribosyl)imidazole-4-carboxamide + L-glutamate + H(+). The catalysed reaction is L-glutamine + H2O = L-glutamate + NH4(+). It participates in amino-acid biosynthesis; L-histidine biosynthesis; L-histidine from 5-phospho-alpha-D-ribose 1-diphosphate: step 5/9. IGPS catalyzes the conversion of PRFAR and glutamine to IGP, AICAR and glutamate. The HisH subunit catalyzes the hydrolysis of glutamine to glutamate and ammonia as part of the synthesis of IGP and AICAR. The resulting ammonia molecule is channeled to the active site of HisF. The protein is Imidazole glycerol phosphate synthase subunit HisH of Xanthomonas axonopodis pv. citri (strain 306).